The primary structure comprises 314 residues: Mitochondrial 2-oxoglutarate/malate carrier protein (314 aa).

Alanine 2 is modified (N-acetylalanine). Serine 6 carries the post-translational modification Phosphoserine. Solcar repeat units follow at residues 23-108 (VKFL…LFER), 117-208 (PGFL…SKQF), and 217-306 (DNIL…MNKA). Residues 24–42 (KFLFGGLAGMGATVFVQPL) form a helical membrane-spanning segment. Lysine 57 bears the N6-succinyllysine mark. A helical membrane pass occupies residues 83–101 (GLSAGLLRQATYTTTRLGI). Residue tyrosine 102 is modified to Phosphotyrosine. The next 3 membrane-spanning stretches (helical) occupy residues 119 to 140 (FLLKAVIGMTAGATGAFVGTPA), 183 to 202 (GCIPTMARAVVVNAAQLASY), and 222 to 240 (HFCASMISGLVTTAASMPV). Lysine 256 bears the N6-acetyllysine mark. The helical transmembrane segment at 281-300 (GFTPYYARLGPHTVLTFIFL) threads the bilayer.

The protein belongs to the mitochondrial carrier (TC 2.A.29) family. In terms of assembly, interacts with SMIM26. The N-terminus is blocked. Heart, liver and brain.

It localises to the mitochondrion inner membrane. It catalyses the reaction (S)-malate(in) + 2-oxoglutarate(out) = (S)-malate(out) + 2-oxoglutarate(in). It carries out the reaction malonate(in) + 2-oxoglutarate(out) = malonate(out) + 2-oxoglutarate(in). The enzyme catalyses succinate(in) + 2-oxoglutarate(out) = succinate(out) + 2-oxoglutarate(in). The catalysed reaction is maleate(in) + 2-oxoglutarate(out) = maleate(out) + 2-oxoglutarate(in). It catalyses the reaction oxaloacetate(in) + 2-oxoglutarate(out) = oxaloacetate(out) + 2-oxoglutarate(in). In terms of biological role, catalyzes the transport of 2-oxoglutarate (alpha-oxoglutarate) across the inner mitochondrial membrane in an electroneutral exchange for malate. Can also exchange 2-oxoglutarate for other dicarboxylic acids such as malonate, succinate, maleate and oxaloacetate, although with lower affinity. Contributes to several metabolic processes, including the malate-aspartate shuttle, the oxoglutarate/isocitrate shuttle, in gluconeogenesis from lactate, and in nitrogen metabolism. Maintains mitochondrial fusion and fission events, and the organization and morphology of cristae. Involved in the regulation of apoptosis. Helps protect from cytotoxic-induced apoptosis by modulating glutathione levels in mitochondria. This is Mitochondrial 2-oxoglutarate/malate carrier protein (SLC25A11) from Bos taurus (Bovine).